The following is a 475-amino-acid chain: Ribulose bisphosphate carboxylase large chain (475 aa).

A propeptide spanning residues 1–2 (MS) is cleaved from the precursor. The residue at position 3 (P3) is an N-acetylproline. Positions 123 and 173 each coordinate substrate. K175 functions as the Proton acceptor in the catalytic mechanism. K177 provides a ligand contact to substrate. K201, D203, and E204 together coordinate Mg(2+). K201 is modified (N6-carboxylysine). Residue H294 is the Proton acceptor of the active site. Positions 295, 327, and 379 each coordinate substrate.

Belongs to the RuBisCO large chain family. Type I subfamily. As to quaternary structure, heterohexadecamer of 8 large chains and 8 small chains; disulfide-linked. The disulfide link is formed within the large subunit homodimers. Requires Mg(2+) as cofactor. The disulfide bond which can form in the large chain dimeric partners within the hexadecamer appears to be associated with oxidative stress and protein turnover.

The protein resides in the plastid. It is found in the chloroplast. The enzyme catalyses 2 (2R)-3-phosphoglycerate + 2 H(+) = D-ribulose 1,5-bisphosphate + CO2 + H2O. The catalysed reaction is D-ribulose 1,5-bisphosphate + O2 = 2-phosphoglycolate + (2R)-3-phosphoglycerate + 2 H(+). Functionally, ruBisCO catalyzes two reactions: the carboxylation of D-ribulose 1,5-bisphosphate, the primary event in carbon dioxide fixation, as well as the oxidative fragmentation of the pentose substrate in the photorespiration process. Both reactions occur simultaneously and in competition at the same active site. The polypeptide is Ribulose bisphosphate carboxylase large chain (Welwitschia mirabilis (Tree tumbo)).